Consider the following 997-residue polypeptide: Translation initiation factor IF-2 (997 aa).

The segment at 101-409 (ELAAEQAAAR…QHQDRRHEQV (309 aa)) is disordered. Composition is skewed to low complexity over residues 116 to 185 (AEAV…QAEP), 195 to 208 (AAPAQAVAEPVEPA), and 244 to 280 (PSAPAESPKSAKAEPAAAPKTTAKPGEIRRAAAPAAP). The span at 281–292 (DRAREEARRAAE) shows a compositional bias: basic and acidic residues. A compositionally biased stretch (gly residues) spans 385 to 394 (RAGGKGGRGG). The span at 400–409 (QHQDRRHEQV) shows a compositional bias: basic and acidic residues. Positions 498–665 (PRAPVVTVMG…NVLLQAEILE (168 aa)) constitute a tr-type G domain. The interval 507-514 (GHVDHGKT) is G1. 507-514 (GHVDHGKT) provides a ligand contact to GTP. The G2 stretch occupies residues 532 to 536 (GITQH). A G3 region spans residues 553–556 (DTPG). GTP-binding positions include 553-557 (DTPGH) and 607-610 (NKID). Residues 607–610 (NKID) form a G4 region. The G5 stretch occupies residues 643–645 (SAK).

It belongs to the TRAFAC class translation factor GTPase superfamily. Classic translation factor GTPase family. IF-2 subfamily.

It localises to the cytoplasm. Its function is as follows. One of the essential components for the initiation of protein synthesis. Protects formylmethionyl-tRNA from spontaneous hydrolysis and promotes its binding to the 30S ribosomal subunits. Also involved in the hydrolysis of GTP during the formation of the 70S ribosomal complex. This Bordetella bronchiseptica (strain ATCC BAA-588 / NCTC 13252 / RB50) (Alcaligenes bronchisepticus) protein is Translation initiation factor IF-2.